The chain runs to 391 residues: Uroporphyrinogen decarboxylase, chloroplastic (391 aa).

Substrate contacts are provided by residues 71 to 75 (RQAGR), Phe90, Ser120, Asp121, Tyr198, Ser253, and His368.

It belongs to the uroporphyrinogen decarboxylase family. In terms of assembly, homodimer.

It is found in the plastid. The protein resides in the chloroplast. It catalyses the reaction uroporphyrinogen III + 4 H(+) = coproporphyrinogen III + 4 CO2. It functions in the pathway porphyrin-containing compound metabolism; protoporphyrin-IX biosynthesis; coproporphyrinogen-III from 5-aminolevulinate: step 4/4. Catalyzes the decarboxylation of four acetate groups of uroporphyrinogen-III to yield coproporphyrinogen-III. The polypeptide is Uroporphyrinogen decarboxylase, chloroplastic (DCUP) (Nicotiana tabacum (Common tobacco)).